Here is a 476-residue protein sequence, read N- to C-terminus: Splicing factor ESS-2 homolog (476 aa).

M1 bears the N-acetylmethionine mark. Residues 1-18 are compositionally biased toward low complexity; sequence METPGASASSLLLPAASR. Disordered stretches follow at residues 1 to 36 and 91 to 148; these read METP…SKQR and LGKM…LPSL. The residue at position 3 (T3) is a Phosphothreonine. Residues 133-142 are compositionally biased toward acidic residues; that stretch reads DGEAGEEEEK. K142 participates in a covalent cross-link: Glycyl lysine isopeptide (Lys-Gly) (interchain with G-Cter in SUMO2). Phosphoserine is present on S292. T386 carries the post-translational modification Phosphothreonine. Phosphoserine occurs at positions 391 and 395. The interval 413–465 is disordered; the sequence is ALRASYTPSPARSTHLKTPASGLQTPTSTPAPGSATRTPLTQDPASITDNLLQ. A compositionally biased stretch (low complexity) spans 437 to 451; the sequence is TPTSTPAPGSATRTP. Residues 452–463 are compositionally biased toward polar residues; that stretch reads LTQDPASITDNL.

It belongs to the ESS2 family. Identified in the spliceosome C complex. Interacts with FRA10AC1. In terms of tissue distribution, highly expressed in heart, brain and skeletal muscle. Detected at low levels in placenta.

It is found in the nucleus. Its function is as follows. May be involved in pre-mRNA splicing. This chain is Splicing factor ESS-2 homolog, found in Homo sapiens (Human).